A 367-amino-acid polypeptide reads, in one-letter code: UDP-N-acetylglucosamine--N-acetylmuramyl-(pentapeptide) pyrophosphoryl-undecaprenol N-acetylglucosamine transferase (367 aa).

UDP-N-acetyl-alpha-D-glucosamine is bound by residues 13–15 (TGG), Arg168, Ser196, Ile252, and Gln297.

It belongs to the glycosyltransferase 28 family. MurG subfamily.

It is found in the cell inner membrane. The enzyme catalyses di-trans,octa-cis-undecaprenyl diphospho-N-acetyl-alpha-D-muramoyl-L-alanyl-D-glutamyl-meso-2,6-diaminopimeloyl-D-alanyl-D-alanine + UDP-N-acetyl-alpha-D-glucosamine = di-trans,octa-cis-undecaprenyl diphospho-[N-acetyl-alpha-D-glucosaminyl-(1-&gt;4)]-N-acetyl-alpha-D-muramoyl-L-alanyl-D-glutamyl-meso-2,6-diaminopimeloyl-D-alanyl-D-alanine + UDP + H(+). It participates in cell wall biogenesis; peptidoglycan biosynthesis. Functionally, cell wall formation. Catalyzes the transfer of a GlcNAc subunit on undecaprenyl-pyrophosphoryl-MurNAc-pentapeptide (lipid intermediate I) to form undecaprenyl-pyrophosphoryl-MurNAc-(pentapeptide)GlcNAc (lipid intermediate II). This is UDP-N-acetylglucosamine--N-acetylmuramyl-(pentapeptide) pyrophosphoryl-undecaprenol N-acetylglucosamine transferase from Methylibium petroleiphilum (strain ATCC BAA-1232 / LMG 22953 / PM1).